The chain runs to 1151 residues: Protein BREAST CANCER SUSCEPTIBILITY 2 homolog A (1151 aa).

BRCA2 repeat units lie at residues 63–97 (MPGE…EKVT), 116–150 (TAET…SDKI), 163–197 (FGVS…LEED), and 257–291 (LKVP…DPEL). The tract at residues 408–427 (GFIPRGRQPGRPADQPLVDI) is disordered.

In terms of assembly, interacts with RAD51 and DMC1. Interacts with DSS1(I). In terms of tissue distribution, expressed in flower buds.

Functionally, involved in double-strand break repair and/or homologous recombination by mediating RAD51- and DMC1-facilitated DNA repair. Plays an essential role in both somatic and meiotic homologous recombination. Is crucial for the formation of RAD51 and DMC1 foci during male meiotic homologous recombination in prophase I. This Arabidopsis thaliana (Mouse-ear cress) protein is Protein BREAST CANCER SUSCEPTIBILITY 2 homolog A.